The sequence spans 260 residues: 3-oxoadipate CoA-transferase subunit B (260 aa).

The active site involves Glu-51.

Belongs to the 3-oxoacid CoA-transferase subunit B family. As to quaternary structure, heterotetramer composed of 2 A and 2 B subunits.

It catalyses the reaction 3-oxoadipate + succinyl-CoA = 3-oxoadipyl-CoA + succinate. It participates in aromatic compound metabolism; beta-ketoadipate pathway; acetyl-CoA and succinyl-CoA from 3-oxoadipate: step 1/2. The chain is 3-oxoadipate CoA-transferase subunit B (catJ) from Pseudomonas knackmussii (strain DSM 6978 / CCUG 54928 / LMG 23759 / B13).